Here is a 217-residue protein sequence, read N- to C-terminus: Large ribosomal subunit protein bL25 (217 aa).

Residues 195–211 show a composition bias toward low complexity; sequence PAEGAAAAPAKGAAKGA. Residues 195 to 217 are disordered; it reads PAEGAAAAPAKGAAKGAAKGGKK.

The protein belongs to the bacterial ribosomal protein bL25 family. CTC subfamily. In terms of assembly, part of the 50S ribosomal subunit; part of the 5S rRNA/L5/L18/L25 subcomplex. Contacts the 5S rRNA. Binds to the 5S rRNA independently of L5 and L18.

In terms of biological role, this is one of the proteins that binds to the 5S RNA in the ribosome where it forms part of the central protuberance. This chain is Large ribosomal subunit protein bL25, found in Acidiphilium cryptum (strain JF-5).